An 807-amino-acid chain; its full sequence is Protein WEAK CHLOROPLAST MOVEMENT UNDER BLUE LIGHT 1 (807 aa).

Residues 1–162 (MEDLKTVEAS…GTPKNVDSHR (162 aa)) form a disordered region. A compositionally biased stretch (polar residues) spans 31-40 (RESNIQSATK). Low complexity predominate over residues 46-73 (QSQTDTEETQQSQTDTEETQQSQTDDTT). Positions 138–157 (RTVSSPRFSGSPVSTGTPKN) are enriched in polar residues. Position 148 is a phosphoserine (Ser-148). 4 coiled-coil regions span residues 191–429 (RMQA…ELVA), 457–489 (DLHA…LKLA), 516–621 (IAVA…ALEE), and 664–724 (AAVS…WRAE). Disordered stretches follow at residues 532–565 (IASV…EAKS) and 722–789 (RAEH…KKKK). Composition is skewed to basic and acidic residues over residues 537-548 (SKEKDAREKMVE), 722-732 (RAEHEQKRKAG), and 739-749 (KNLKESFEGGK). A compositionally biased stretch (polar residues) spans 761–781 (SSPSESYGTEENSETNLSPQT).

It belongs to the WEB family. As to quaternary structure, interacts with PMI2. In terms of tissue distribution, ubiquitous but preferentially in chloroplast-containing tissues.

The protein localises to the cytoplasm. In terms of biological role, required for the chloroplast avoidance response under high intensity blue light. This avoidance response consists in the relocation of chloroplasts on the anticlinal side of exposed cells. Acts in association with PMI2 to maintain the velocity of chloroplast photorelocation movement via cp-actin filaments regulation. In Arabidopsis thaliana (Mouse-ear cress), this protein is Protein WEAK CHLOROPLAST MOVEMENT UNDER BLUE LIGHT 1 (WEB1).